We begin with the raw amino-acid sequence, 351 residues long: 3-dehydroquinate synthase (351 aa).

NAD(+)-binding positions include 60–65 (DGEEYK), 94–98 (GVISD), 118–119 (TT), K131, K140, and 158–161 (FLKT). Residues E173, H239, and H256 each contribute to the Zn(2+) site.

This sequence belongs to the sugar phosphate cyclases superfamily. Dehydroquinate synthase family. The cofactor is NAD(+). It depends on Co(2+) as a cofactor. Zn(2+) is required as a cofactor.

The protein localises to the cytoplasm. It carries out the reaction 7-phospho-2-dehydro-3-deoxy-D-arabino-heptonate = 3-dehydroquinate + phosphate. It participates in metabolic intermediate biosynthesis; chorismate biosynthesis; chorismate from D-erythrose 4-phosphate and phosphoenolpyruvate: step 2/7. Functionally, catalyzes the conversion of 3-deoxy-D-arabino-heptulosonate 7-phosphate (DAHP) to dehydroquinate (DHQ). The protein is 3-dehydroquinate synthase of Campylobacter jejuni subsp. jejuni serotype O:2 (strain ATCC 700819 / NCTC 11168).